An 80-amino-acid chain; its full sequence is Polcalcin Cyn d 7 (80 aa).

EF-hand domains lie at 2–37 (ADTGDMEHIFKRFDTNGDGKISLAELTDALRTLGST) and 40–72 (DEVQRMMAEIDTDGDGFIDFDEFISFCNANPGL). 9 residues coordinate Ca(2+): Asp-15, Asn-17, Asp-19, Lys-21, Glu-26, Asp-50, Asp-52, Asp-54, and Glu-61.

This is Polcalcin Cyn d 7 from Cynodon dactylon (Bermuda grass).